A 440-amino-acid polypeptide reads, in one-letter code: MSGFGGVKNVVVVGLGMTGLSVVKHLLKTTISLTIKVIDTRDTPPGHDQLPENVELHSGGWQQDWLINADLIVTNPGIALASPQLKPAIDKGIKIVGDIELFAWAVNAPVIAITGSNGKSTVTDLTGEMAKAAGVKTAVGGNIGFAALDLLEQDAELYVLELSSFQLETTSTLKLKAAAFLNLSEDHMDRYQGMADYRQAKLRIFEHAEVCIVNRDDKQTYPDVEKTLKSFGFDQGDYGCIEKDGIEYLAKNTVPLLAANELGLVGKHNIANSLVAIALLDAAGINLDATLDTLRTYNGLTHRCQVVADNNGIRWVNDSKATNVASTLAALSGLQLEGKLHLLVGGVGKGADFSELSPALHDLNLMMYCFGEDGDQFVSLDPRSLLCETMNEAIATLYPTLNKGDMVMLSPACASFDQYANFMARGDAFTQLAKQYSIES.

115–121 (GSNGKST) serves as a coordination point for ATP.

Belongs to the MurCDEF family.

The protein resides in the cytoplasm. The catalysed reaction is UDP-N-acetyl-alpha-D-muramoyl-L-alanine + D-glutamate + ATP = UDP-N-acetyl-alpha-D-muramoyl-L-alanyl-D-glutamate + ADP + phosphate + H(+). It functions in the pathway cell wall biogenesis; peptidoglycan biosynthesis. Its function is as follows. Cell wall formation. Catalyzes the addition of glutamate to the nucleotide precursor UDP-N-acetylmuramoyl-L-alanine (UMA). This is UDP-N-acetylmuramoylalanine--D-glutamate ligase from Aliivibrio fischeri (strain ATCC 700601 / ES114) (Vibrio fischeri).